We begin with the raw amino-acid sequence, 481 residues long: Zygotic gap protein knirps (481 aa).

Positions 2–78 (NQTCKVCGEP…VGMSKGGSRY (77 aa)) form a DNA-binding region, nuclear receptor. 2 consecutive NR C4-type zinc fingers follow at residues 5-25 (CKVCGEPAAGFHFGAFTCEGC) and 42-66 (CKNDGKCIIDKKNRTTCKACRLRKC). Composition is skewed to low complexity over residues 100-111 (AAAGKAPGHATG), 127-148 (QQQQQQHQQQQQQQHQHQQQQQ), 245-264 (TPPTVATVPQQSQPQPAASP), 316-335 (SHSSSASPTPSKSQSSSPLS), and 420-440 (TTNSCSSSTSTSSSNSSTSST). Disordered stretches follow at residues 100-161 (AAAG…GYTG), 231-294 (SVDS…PHTI), 308-336 (LLPGLTTASHSSSASPTPSKSQSSSPLSF), and 420-442 (TTNSCSSSTSTSSSNSSTSSTEA).

Belongs to the nuclear hormone receptor family. NR0 subfamily.

It is found in the nucleus. Its function is as follows. Transcriptional repressor. Binds to multiple sites in the eve stripe 3 enhancer element. Plays an essential role in the segmentation process both by refining the expression patterns of gap genes and by establishing pair-rules stripes of gene expression. This Drosophila virilis (Fruit fly) protein is Zygotic gap protein knirps (kni).